Reading from the N-terminus, the 733-residue chain is MSTQFRKSNHNSHSSKKLNPALKSKIDTLTELFPDWTSDDLIDIVQEYDDLETIIDKITSGAVTRWDEVKKPAKKEKYEKKEQQHSYVPQQHLPNPEDDITYKSSNNSNSFTSTKHNSSNNYTQARNKKKVQTPRAHTTGKHVNLDKGKHVPSKPVSNTTSWAAAVSVDTKHDVPQDSNDNNNEELEAQGQQAQENQEKEQEEQQQQEGHNNKEEHKQIEQPSLSSKKTTSKTSAPQPKKMSWAAIATPKPKAVKKTESPLENVAELKKEISDIKKDDQKSEASEEKVNEQETSAQEQEEETAEPSEENEDRVPEVDGEEVQEEAEEKEQVKEEEQTAEELEQEQDNVAAPEEEVTVVEEKVEISAVISEPPEDQANTVPQPQQQQQQQQQQPQQPQQQQQQPQQQQQPQQPQQQLQQQQQQQQQPVQAQAQAQEEQLSQNYYTQQQQQQFAQQQHQFQQQYLSQQQQYAQQQQQHPQPQSQQPQSQQSPQSQKQGNNVAAQQYYMYQNQFPGYSYPGMFDSQGYAYGQQYQQLAQNNAQTSGNANQYNFQQGYGQAGANTAAANLTSAAAAAAASPATAHAQPQQQQPYGGSFMPYYAHFYQQSFPYGQPQYGVAGQYPYQLPKNNYNYYQTQNGQEQQSPNQGVAQHSEDSQQKQSQQQQQQQPQGQPQPEVQMQNGQSVNPQQQMQFQQYYQFQQQQQQAAAAAAAAAQQGVPYGYNGYDYNSKNSRGFY.

The region spanning 21-63 (ALKSKIDTLTELFPDWTSDDLIDIVQEYDDLETIIDKITSGAV) is the CUE domain. Residues 69–84 (VKKPAKKEKYEKKEQQ) show a composition bias toward basic and acidic residues. Disordered regions lie at residues 69–446 (VKKP…YTQQ), 465–498 (QQQQYAQQQQQHPQPQSQQPQSQQSPQSQKQGNN), and 635–682 (NGQE…GQSV). A compositionally biased stretch (low complexity) spans 103–121 (KSSNNSNSFTSTKHNSSNN). Positions 210–219 (HNNKEEHKQI) are enriched in basic and acidic residues. A compositionally biased stretch (low complexity) spans 222 to 240 (PSLSSKKTTSKTSAPQPKK). Positions 255-290 (KKTESPLENVAELKKEISDIKKDDQKSEASEEKVNE) are enriched in basic and acidic residues. Residues Ser259, Ser272, and Ser306 each carry the phosphoserine modification. Composition is skewed to acidic residues over residues 297 to 327 (EQEEETAEPSEENEDRVPEVDGEEVQEEAEE) and 336 to 357 (QTAEELEQEQDNVAAPEEEVTV). Thr337 carries the phosphothreonine modification. 2 stretches are compositionally biased toward low complexity: residues 380–446 (PQPQ…YTQQ) and 465–495 (QQQQYAQQQQQHPQPQSQQPQSQQSPQSQKQ). The contains the proteolytic activation cleavage site stretch occupies residues 495–525 (QGNNVAAQQYYMYQNQFPGYSYPGMFDSQGY). Position 641 is a phosphoserine (Ser641). The segment covering 655–677 (QKQSQQQQQQQPQGQPQPEVQMQ) has biased composition (low complexity).

Belongs to the DEF1 family. In terms of assembly, homodimer; may form higher order oligomers. Interacts with the large RNA polymerase II subunit RPO21; the interaction is direct and serves to bridge RPO21 to the Elongin complex in a manner dependent on transcription stress. Interacts with RAD26. Post-translationally, ubiquitinated. In terms of processing, proteolytically cleaved by the proteasome in response to transcription stress; the resulting N-terminal form constitutes the activated nuclear form and the C-terminal portion is degraded.

The protein resides in the cytoplasm. Its subcellular location is the nucleus. It localises to the chromosome. The protein localises to the telomere. Its function is as follows. Recruits the ubiquitination machinery to RNA polymerase II for polyubiquitination, removal and degradation, when the transcription-coupled repair (TCR) factor RAD26 fails to efficiently displace stalled RNA polymerase II. Also involved in telomere length regulation. Binds DNA. This chain is RNA polymerase II degradation factor 1 (DEF1), found in Saccharomyces cerevisiae (strain YJM789) (Baker's yeast).